The chain runs to 146 residues: D-aminoacyl-tRNA deacylase (146 aa).

The Gly-cisPro motif, important for rejection of L-amino acids motif lies at 138–139 (GP).

This sequence belongs to the DTD family. In terms of assembly, homodimer.

The protein resides in the cytoplasm. The enzyme catalyses glycyl-tRNA(Ala) + H2O = tRNA(Ala) + glycine + H(+). It carries out the reaction a D-aminoacyl-tRNA + H2O = a tRNA + a D-alpha-amino acid + H(+). In terms of biological role, an aminoacyl-tRNA editing enzyme that deacylates mischarged D-aminoacyl-tRNAs. Also deacylates mischarged glycyl-tRNA(Ala), protecting cells against glycine mischarging by AlaRS. Acts via tRNA-based rather than protein-based catalysis; rejects L-amino acids rather than detecting D-amino acids in the active site. By recycling D-aminoacyl-tRNA to D-amino acids and free tRNA molecules, this enzyme counteracts the toxicity associated with the formation of D-aminoacyl-tRNA entities in vivo and helps enforce protein L-homochirality. The protein is D-aminoacyl-tRNA deacylase of Xanthomonas axonopodis pv. citri (strain 306).